The chain runs to 210 residues: Ribosomal RNA large subunit methyltransferase E (210 aa).

Glycine 60, tryptophan 62, aspartate 85, aspartate 101, and aspartate 126 together coordinate S-adenosyl-L-methionine. Lysine 166 functions as the Proton acceptor in the catalytic mechanism.

Belongs to the class I-like SAM-binding methyltransferase superfamily. RNA methyltransferase RlmE family.

The protein localises to the cytoplasm. It catalyses the reaction uridine(2552) in 23S rRNA + S-adenosyl-L-methionine = 2'-O-methyluridine(2552) in 23S rRNA + S-adenosyl-L-homocysteine + H(+). Functionally, specifically methylates the uridine in position 2552 of 23S rRNA at the 2'-O position of the ribose in the fully assembled 50S ribosomal subunit. The chain is Ribosomal RNA large subunit methyltransferase E from Bordetella pertussis (strain Tohama I / ATCC BAA-589 / NCTC 13251).